A 684-amino-acid polypeptide reads, in one-letter code: Probable Xaa-Pro aminopeptidase P (684 aa).

Mn(2+)-binding residues include D481, D492, E590, and E604.

It belongs to the peptidase M24B family. Requires Mn(2+) as cofactor.

It catalyses the reaction Release of any N-terminal amino acid, including proline, that is linked to proline, even from a dipeptide or tripeptide.. Its function is as follows. Catalyzes the removal of a penultimate prolyl residue from the N-termini of peptides. The sequence is that of Probable Xaa-Pro aminopeptidase P (ampp) from Neurospora crassa (strain ATCC 24698 / 74-OR23-1A / CBS 708.71 / DSM 1257 / FGSC 987).